The primary structure comprises 299 residues: tRNA pseudouridine synthase B (299 aa).

The Nucleophile role is filled by Asp39.

The protein belongs to the pseudouridine synthase TruB family. Type 1 subfamily.

It catalyses the reaction uridine(55) in tRNA = pseudouridine(55) in tRNA. Its function is as follows. Responsible for synthesis of pseudouridine from uracil-55 in the psi GC loop of transfer RNAs. This Syntrophomonas wolfei subsp. wolfei (strain DSM 2245B / Goettingen) protein is tRNA pseudouridine synthase B.